Reading from the N-terminus, the 505-residue chain is RNA-binding region-containing protein 3 (505 aa).

The 76-residue stretch at 15–90 (KTLIIRHLPR…RTLVVEFAKD (76 aa)) folds into the RRM 1 domain. Disordered regions lie at residues 96–123 (ILKD…QPSV), 193–236 (PPMF…EEER), 354–374 (AQVP…SEFI), and 486–505 (ARSA…GRKH). Positions 193–214 (PPMFEMPSGPLPPPFPPENPPL) are enriched in pro residues. 2 stretches are compositionally biased toward acidic residues: residues 221-235 (GSEE…DEEE) and 361-370 (EEQEEDEDIP). In terms of domain architecture, RRM 2 spans 405–488 (CRLYVKNVAK…KPLVVQFARS (84 aa)). A compositionally biased stretch (basic and acidic residues) spans 491–505 (PKQESADPKKGGRKH).

As to quaternary structure, component of the U11/U12 snRNPs that are part of the U12-type spliceosome.

The protein localises to the nucleus. Functionally, participates in pre-mRNA U12-dependent splicing, performed by the minor spliceosome which removes U12-type introns. U12-type introns comprise less than 1% of all non-coding sequences. The chain is RNA-binding region-containing protein 3 from Danio rerio (Zebrafish).